Consider the following 557-residue polypeptide: Formate--tetrahydrofolate ligase (557 aa).

An ATP-binding site is contributed by 65 to 72; sequence TPAGEGKT.

Belongs to the formate--tetrahydrofolate ligase family.

It carries out the reaction (6S)-5,6,7,8-tetrahydrofolate + formate + ATP = (6R)-10-formyltetrahydrofolate + ADP + phosphate. The protein operates within one-carbon metabolism; tetrahydrofolate interconversion. In Acidiphilium cryptum (strain JF-5), this protein is Formate--tetrahydrofolate ligase.